Consider the following 331-residue polypeptide: Methionyl-tRNA formyltransferase (331 aa).

A (6S)-5,6,7,8-tetrahydrofolate-binding site is contributed by 111–114; the sequence is SLLP.

Belongs to the Fmt family.

The enzyme catalyses L-methionyl-tRNA(fMet) + (6R)-10-formyltetrahydrofolate = N-formyl-L-methionyl-tRNA(fMet) + (6S)-5,6,7,8-tetrahydrofolate + H(+). Functionally, attaches a formyl group to the free amino group of methionyl-tRNA(fMet). The formyl group appears to play a dual role in the initiator identity of N-formylmethionyl-tRNA by promoting its recognition by IF2 and preventing the misappropriation of this tRNA by the elongation apparatus. This is Methionyl-tRNA formyltransferase from Thermosynechococcus vestitus (strain NIES-2133 / IAM M-273 / BP-1).